The primary structure comprises 482 residues: Transcription termination/antitermination protein NusA (482 aa).

Positions 133 to 197 (NKVVIGYVQQ…NGIEVILSRT (65 aa)) constitute an S1 motif domain. The KH domain maps to 300-446 (LHKALVVVSD…NDNDESMEKV (147 aa)).

This sequence belongs to the NusA family. Monomer. Binds directly to the core enzyme of the DNA-dependent RNA polymerase and to nascent RNA.

The protein localises to the cytoplasm. Participates in both transcription termination and antitermination. The protein is Transcription termination/antitermination protein NusA of Borreliella burgdorferi (strain ATCC 35210 / DSM 4680 / CIP 102532 / B31) (Borrelia burgdorferi).